Here is a 268-residue protein sequence, read N- to C-terminus: Purine nucleoside phosphorylase (268 aa).

Residues Ser36, His68, 88–90, and Ala120 each bind phosphate; that span reads RIH. Glu189 contributes to the a purine D-ribonucleoside binding site. Residue Ser208 participates in phosphate binding. Asn231 is a binding site for a purine D-ribonucleoside.

The protein belongs to the PNP/MTAP phosphorylase family. In terms of assembly, homotrimer.

It catalyses the reaction a purine 2'-deoxy-D-ribonucleoside + phosphate = a purine nucleobase + 2-deoxy-alpha-D-ribose 1-phosphate. Its pathway is purine metabolism; purine nucleoside salvage. Functionally, the purine nucleoside phosphorylases catalyze the phosphorolytic breakdown of the N-glycosidic bond in the beta-(deoxy)ribonucleoside molecules, with the formation of the corresponding free purine bases and pentose-1-phosphate. Cleaves guanosine, inosine, 2'-deoxyguanosine and 2'-deoxyinosine. This Mycobacterium leprae (strain TN) protein is Purine nucleoside phosphorylase (punA).